We begin with the raw amino-acid sequence, 365 residues long: Peptide chain release factor 2 (365 aa).

Residue Gln-252 is modified to N5-methylglutamine.

Belongs to the prokaryotic/mitochondrial release factor family. Post-translationally, methylated by PrmC. Methylation increases the termination efficiency of RF2.

It localises to the cytoplasm. Its function is as follows. Peptide chain release factor 2 directs the termination of translation in response to the peptide chain termination codons UGA and UAA. In Tolumonas auensis (strain DSM 9187 / NBRC 110442 / TA 4), this protein is Peptide chain release factor 2.